A 704-amino-acid polypeptide reads, in one-letter code: Low calcium response locus protein D (704 aa).

Helical transmembrane passes span 18–35 (IMLA…VLPL), 42–61 (ILIA…AIYI), 108–132 (FVVG…FLVI), 200–220 (AIAG…IGVT), 235–259 (ILTV…GIIV), 278–297 (VVAQ…LFGL), and 304–320 (VTFL…GYML).

This sequence belongs to the FHIPEP (flagella/HR/invasion proteins export pore) family.

It is found in the cell inner membrane. In terms of biological role, could be involved in the secretion of the yop virulence proteins. In Yersinia pestis, this protein is Low calcium response locus protein D (lcrD).